Consider the following 242-residue polypeptide: Floral homeotic protein AGAMOUS (242 aa).

The 55-residue stretch at arginine 19–tyrosine 73 folds into the MADS-box domain. Positions alanine 103–serine 193 constitute a K-box domain.

In terms of tissue distribution, expressed exclusively in stamens and carpels.

The protein resides in the nucleus. Functionally, probable transcription factor involved in regulating genes that determines stamen and carpel development in wild-type flowers. In Petunia hybrida (Petunia), this protein is Floral homeotic protein AGAMOUS (AG1).